Here is a 320-residue protein sequence, read N- to C-terminus: Small ribosomal subunit protein mS35 (320 aa).

The segment at 24-63 (SVASPAAPRAGPRTASRSERPMRRKALPPRTEKMDTDQDW) is disordered.

Belongs to the mitochondrion-specific ribosomal protein mS35 family. Component of the mitochondrial ribosome small subunit (28S) which comprises a 12S rRNA and about 30 distinct proteins.

Its subcellular location is the mitochondrion. The protein is Small ribosomal subunit protein mS35 of Mus musculus (Mouse).